Here is a 330-residue protein sequence, read N- to C-terminus: MRVTMSLEALTTEALAAIAAAQDLVALDQVRVQFTGKKSQLAEQSKALGKMDPEERKVQGAAIHAVRETINNALTERQTALQQAALAQKLASETIDITLPGRGQCVGTVHPVTQVQERICQFFTKAGFTVATGPEVEDDYHNFEALNIPGHHPARAMHDTFYFDANHLLRTHTSGVQIRTMETSQPPIRIVCPGRVYRCDSDQTHSPMFHQIEGLYVAENTSFAELKGLLINLLNEFFEKDLKVRFRPSYFPFTEPSAEVDIMDERGRWLEVLGCGMVHPNVLRAAGIDPDKYKGFAFGLGVERFAMLRYGINDLRMFYQNDVRFLRQFA.

Glu-255 contributes to the Mg(2+) binding site.

It belongs to the class-II aminoacyl-tRNA synthetase family. Phe-tRNA synthetase alpha subunit type 1 subfamily. In terms of assembly, tetramer of two alpha and two beta subunits. Requires Mg(2+) as cofactor.

It is found in the cytoplasm. The enzyme catalyses tRNA(Phe) + L-phenylalanine + ATP = L-phenylalanyl-tRNA(Phe) + AMP + diphosphate + H(+). The chain is Phenylalanine--tRNA ligase alpha subunit from Acinetobacter baumannii (strain AYE).